A 115-amino-acid chain; its full sequence is Large ribosomal subunit protein bL20c (115 aa).

The protein belongs to the bacterial ribosomal protein bL20 family.

Its subcellular location is the plastid. The protein resides in the chloroplast. Functionally, binds directly to 23S ribosomal RNA and is necessary for the in vitro assembly process of the 50S ribosomal subunit. It is not involved in the protein synthesizing functions of that subunit. In Nymphaea alba (White water-lily), this protein is Large ribosomal subunit protein bL20c.